A 468-amino-acid chain; its full sequence is uncharacterized protein (468 aa).

The disordered stretch occupies residues 1–22; it reads MVKRSSHRQVVLDEDDEENYNN. The segment at 85 to 123 adopts an RING-type zinc-finger fold; sequence CPICTEALQRPFTTHCGHTYCYECLLNWLKESKSCPTCR. Residues 386–402 are compositionally biased toward low complexity; that stretch reads DSLNSSSNNSPSHNNIH. Positions 386 to 468 are disordered; sequence DSLNSSSNNS…TIQLDSDEES (83 aa). Positions 417 to 434 are enriched in polar residues; the sequence is IVTNGTGLRSSQSSSQNR.

It localises to the nucleus. This is an uncharacterized protein from Schizosaccharomyces pombe (strain 972 / ATCC 24843) (Fission yeast).